The primary structure comprises 613 residues: Cilia- and flagella-associated protein 100 (613 aa).

The segment at 36 to 55 (KSKESKKNKGNVTISDRSSN) is disordered. Residues 45–55 (GNVTISDRSSN) are compositionally biased toward polar residues. Coiled coils occupy residues 167–198 (ALAM…FLEK), 233–260 (VEIR…KHYK), 396–435 (FTKL…DKEV), and 504–580 (GTVQ…RGRK).

It belongs to the CFAP100 family.

The protein localises to the cytoplasm. The protein resides in the cytoskeleton. It is found in the cilium axoneme. In terms of biological role, may play a role in ciliary/flagellar motility by regulating the assembly and the activity of axonemal inner dynein arm. This chain is Cilia- and flagella-associated protein 100, found in Mus musculus (Mouse).